The primary structure comprises 305 residues: NAD kinase 2 (305 aa).

The active-site Proton acceptor is Asp-78. Residues 78–79 (DG), 152–153 (NE), Asp-182, 193–198 (TAYSLS), and Asn-251 contribute to the NAD(+) site.

This sequence belongs to the NAD kinase family. A divalent metal cation is required as a cofactor.

It localises to the cytoplasm. The catalysed reaction is NAD(+) + ATP = ADP + NADP(+) + H(+). Its function is as follows. Involved in the regulation of the intracellular balance of NAD and NADP, and is a key enzyme in the biosynthesis of NADP. Catalyzes specifically the phosphorylation on 2'-hydroxyl of the adenosine moiety of NAD to yield NADP. The sequence is that of NAD kinase 2 from Synechococcus sp. (strain ATCC 27144 / PCC 6301 / SAUG 1402/1) (Anacystis nidulans).